The primary structure comprises 804 residues: MSYNHKEIEKKWQKYWAKNNCFNTLDDPNKEKFYALDMFPYPSGQGLHVGHPEGYTATDILSRMKRAQGYNVLHPMGWDAFGLPAEQYALDTGNDPAEFTKKNIETFRRQINSLGFSYDWNREINTTDPEYYKWTQWIFTKLYEKGLAYEAEVAVNWVPELGTVISNEEVIDGKSERGGYDVVRRPMRQWMLKITAYADRLLEDLELVDWPESIKDMQRNWIGRSEGANVTFKVAGTEESFTVFTTRPDTLFGATYTVLAPELELVKKITTPEQTAAVEAYIEETSKKSDLNRTDLAKEKTGVFTGAYAINPVNGQEIPIWIGDYVLASYGTGAIMAVPAHDERDYEFAKTFGIDILPVIAGGDITTEAYTGDGPHINSDFLNGLNKAEAIAKMNEWLEENHVGKKEVSYRLRDWLFSRQRYWGEPIPVIHWEDGTTTTVPESELPLRLPVTSDIRPSGTGESPLANIDEWVNVVDPETGMKGKRETNTMPQWAGSSWYYLRFIDPHNKNEIADFEKLKRWLPVDIYIGGAEHAVLHLLYARFWHKFLYDIGVVPTKEPFQKLYNQGMILGENNEKMSKSRGNVVNPDDVVAKYGADTLRLYEMFMGPLDASIAWNENGLEGSRKFLDRVWRLIVDEEGKMRDRITTINDGRLTKVYHQTVKKVTEDMANLHFNTAISQLMVFVNEANKVDALPYEYVEGFVQLLAPIAPHIGEELWQILGNEESLTYVPWPTYDETALVEDEVEVVFQVNGKLRGKQNVARGLSKEELEQIAMNHEAVKEFIEGKTVRKVIAVPDKLVNIVAN.

The short motif at Pro40–His51 is the 'HIGH' region element. The 'KMSKS' region signature appears at Lys576 to Ser580. Lys579 contacts ATP.

It belongs to the class-I aminoacyl-tRNA synthetase family.

The protein resides in the cytoplasm. The catalysed reaction is tRNA(Leu) + L-leucine + ATP = L-leucyl-tRNA(Leu) + AMP + diphosphate. The polypeptide is Leucine--tRNA ligase (Enterococcus faecalis (strain ATCC 700802 / V583)).